The primary structure comprises 144 residues: Ribonuclease VapC45 (144 aa).

Asp-7 and Asp-102 together coordinate Mg(2+).

Belongs to the PINc/VapC protein family. Mg(2+) is required as a cofactor.

Its function is as follows. Toxic component of a type II toxin-antitoxin (TA) system. An RNase. Its cognate antitoxin is VapB45. The chain is Ribonuclease VapC45 from Mycobacterium tuberculosis (strain CDC 1551 / Oshkosh).